The sequence spans 820 residues: Leucine--tRNA ligase (820 aa).

The 'HIGH' region motif lies at 42 to 52; sequence PYPSGDLHMGH. The short motif at 576 to 580 is the 'KMSKS' region element; it reads KMSKS. Residue lysine 579 participates in ATP binding.

Belongs to the class-I aminoacyl-tRNA synthetase family.

The protein resides in the cytoplasm. The enzyme catalyses tRNA(Leu) + L-leucine + ATP = L-leucyl-tRNA(Leu) + AMP + diphosphate. This chain is Leucine--tRNA ligase, found in Coxiella burnetii (strain CbuK_Q154) (Coxiella burnetii (strain Q154)).